The following is a 520-amino-acid chain: Glucose-1-phosphate adenylyltransferase small subunit, chloroplastic (520 aa).

The transit peptide at 1–71 directs the protein to the chloroplast; sequence MATMAAIGSL…RTPSIVSPKA (71 aa). Positions 1–81 are disordered; the sequence is MATMAAIGSL…VSDSQNSQTC (81 aa). Residues 14-27 are compositionally biased toward low complexity; the sequence is SSSSNHTRRLSSSS. Residues 28–51 are compositionally biased toward polar residues; it reads QRKTLSFSSSSLTGEKLNPTQEII.

It belongs to the bacterial/plant glucose-1-phosphate adenylyltransferase family. Heterotetramer. As to expression, leaves.

It localises to the plastid. The protein resides in the chloroplast. It carries out the reaction alpha-D-glucose 1-phosphate + ATP + H(+) = ADP-alpha-D-glucose + diphosphate. It participates in glycan biosynthesis; starch biosynthesis. Its activity is regulated as follows. Activated by 3'phosphoglycerate, inhibited by orthophosphate. Allosteric regulation. In terms of biological role, this protein plays a role in synthesis of starch. It catalyzes the synthesis of the activated glycosyl donor, ADP-glucose from Glc-1-P and ATP. The chain is Glucose-1-phosphate adenylyltransferase small subunit, chloroplastic (AGPS1) from Brassica napus (Rape).